Here is a 298-residue protein sequence, read N- to C-terminus: Tyrosine recombinase XerC (298 aa).

The region spanning 1-85 is the Core-binding (CB) domain; the sequence is MKPIAAFQEY…SLRSFYRYLT (85 aa). In terms of domain architecture, Tyr recombinase spans 106–291; the sequence is HLPQFFYEAE…TMAHLKNEYM (186 aa). Active-site residues include Arg-146, Lys-170, His-243, Arg-246, and His-269. The active-site O-(3'-phospho-DNA)-tyrosine intermediate is the Tyr-278.

It belongs to the 'phage' integrase family. XerC subfamily. In terms of assembly, forms a cyclic heterotetrameric complex composed of two molecules of XerC and two molecules of XerD.

The protein resides in the cytoplasm. Site-specific tyrosine recombinase, which acts by catalyzing the cutting and rejoining of the recombining DNA molecules. The XerC-XerD complex is essential to convert dimers of the bacterial chromosome into monomers to permit their segregation at cell division. It also contributes to the segregational stability of plasmids. This chain is Tyrosine recombinase XerC, found in Lacticaseibacillus paracasei (strain ATCC 334 / BCRC 17002 / CCUG 31169 / CIP 107868 / KCTC 3260 / NRRL B-441) (Lactobacillus paracasei).